The chain runs to 252 residues: C-type lectin domain family 2 member D3 (252 aa).

A disordered region spans residues 1-58; the sequence is MSSSAHLQDAPPLLSGTLTQNEGQTSLRQSSSCGPSAASASESLSGYTESRIPHSKVR. Topologically, residues 1 to 78 are cytoplasmic; it reads MSSSAHLQDA…ESRVKRYCCY (78 aa). The span at 16–29 shows a compositional bias: polar residues; the sequence is GTLTQNEGQTSLRQ. The span at 30–43 shows a compositional bias: low complexity; it reads SSSCGPSAASASES. Residues 79–99 traverse the membrane as a helical; Signal-anchor for type II membrane protein segment; it reads GGVITVVAIAIVVPLSVTLSV. Topologically, residues 100 to 252 are extracellular; the sequence is KQMEQTSINN…KPKKYISQSQ (153 aa). Residues 137–242 enclose the C-type lectin domain; the sequence is YGNKCFYFSE…VYVERPWICS (106 aa). The N-linked (GlcNAc...) asparagine glycan is linked to N150. A disulfide bridge connects residues C158 and C241.

It localises to the cell membrane. Lectin-type cell surface receptor. This chain is C-type lectin domain family 2 member D3 (Clec2d3), found in Rattus norvegicus (Rat).